Reading from the N-terminus, the 369-residue chain is tRNA(Met) cytidine acetate ligase (369 aa).

ATP is bound by residues 7–20, Gly96, Asn152, and Arg175; that span reads VAEF…HKYL.

This sequence belongs to the TmcAL family.

It localises to the cytoplasm. It carries out the reaction cytidine(34) in elongator tRNA(Met) + acetate + ATP = N(4)-acetylcytidine(34) in elongator tRNA(Met) + AMP + diphosphate. Functionally, catalyzes the formation of N(4)-acetylcytidine (ac(4)C) at the wobble position of elongator tRNA(Met), using acetate and ATP as substrates. First activates an acetate ion to form acetyladenylate (Ac-AMP) and then transfers the acetyl group to tRNA to form ac(4)C34. This is tRNA(Met) cytidine acetate ligase from Streptococcus agalactiae serotype III (strain NEM316).